The sequence spans 1124 residues: ATP-dependent DNA helicase mph1 (1124 aa).

2 disordered regions span residues 1–103 and 123–302; these read MFTL…EARS and QLTQ…PTQH. 2 stretches are compositionally biased toward acidic residues: residues 7–17 and 169–178; these read DSSDYFDDDLG and RDDEYDDDEE. Positions 210-222 are enriched in polar residues; the sequence is TPIIGQQSTTIEA. The span at 226 to 236 shows a compositional bias: acidic residues; sequence LLDDIPDDAFD. Over residues 255–271 the composition is skewed to polar residues; that stretch reads SFTQSTNRPLGVRQTTL. Positions 328 to 496 constitute a Helicase ATP-binding domain; it reads IAQKGLFHNL…AVIDGLDISR (169 aa). Residue 341 to 348 participates in ATP binding; sequence LPTGLGKT. The DEAH box motif lies at 444-447; the sequence is DEAH. The 175-residue stretch at 666–840 folds into the Helicase C-terminal domain; sequence YLKQVVLNHF…GTRFTFHDDM (175 aa). Positions 855–873 are enriched in basic and acidic residues; that stretch reads KRAIDIPEENTVRDLPEPK. 2 disordered regions span residues 855–923 and 1016–1124; these read KRAI…TPEP and MPKA…DSDD. Composition is skewed to basic residues over residues 874-886 and 906-916; these read RRGRAPKRPPKKF and SKRRVPNKSKA.

Belongs to the DEAD box helicase family. DEAH subfamily. FANCM sub-subfamily. In terms of assembly, interacts with the MHF histone-fold complex to form the FANCM-MHF complex.

It localises to the nucleus. The catalysed reaction is ATP + H2O = ADP + phosphate + H(+). Functionally, ATP-dependent DNA helicase involved in DNA damage repair by homologous recombination and in genome maintenance. Capable of unwinding D-loops. Plays a role in limiting crossover recombinants during mitotic DNA double-strand break (DSB) repair. Component of a FANCM-MHF complex which promotes gene conversion at blocked replication forks, probably by reversal of the stalled fork. The sequence is that of ATP-dependent DNA helicase mph1 from Aspergillus niger (strain ATCC MYA-4892 / CBS 513.88 / FGSC A1513).